We begin with the raw amino-acid sequence, 81 residues long: High-potential iron-sulfur protein (81 aa).

Residues Cys43, Cys46, Cys59, and Cys73 each contribute to the [4Fe-4S] cluster site.

The protein belongs to the high-potential iron-sulfur protein (HiPIP) family. Homodimer.

Its function is as follows. Specific class of high-redox-potential 4Fe-4S ferredoxins. Functions in anaerobic electron transport in most purple and in some other photosynthetic bacteria and in at least one genus (Paracoccus) of halophilic, denitrifying bacteria. The polypeptide is High-potential iron-sulfur protein (hip) (Thiococcus pfennigii (Thiocapsa pfennigii)).